The primary structure comprises 217 residues: Carbon disulfide hydrolase (217 aa).

3 residues coordinate Zn(2+): C39, H98, and C101. The interval 192–217 (DKEKRARTDCTPTPYGVKGNQPPRWK) is disordered.

It belongs to the beta-class carbonic anhydrase family. Forms only homooctamers in solution. Requires Zn(2+) as cofactor.

It catalyses the reaction carbon disulfide + 2 H2O = 2 hydrogen sulfide + CO2 + 2 H(+). It functions in the pathway sulfur metabolism; hydrogen sulfide biosynthesis. Its function is as follows. Catalyzes the conversion of carbon disulfide into hydrogen sulfide and carbon dioxide, with carbonyl sulfide as an intermediate. Likely plays a key role in sulfur metabolism that allows A.thiooxidans S1p to grow on carbon disulfide as the main carbon and energy source. Does not show carbonic anhydrase activity (hydration of CO(2) to carbonate). This Acidithiobacillus thiooxidans (Thiobacillus thiooxidans) protein is Carbon disulfide hydrolase.